Reading from the N-terminus, the 338-residue chain is Heat-inducible transcription repressor HrcA (338 aa).

Belongs to the HrcA family.

Negative regulator of class I heat shock genes (grpE-dnaK-dnaJ and groELS operons). Prevents heat-shock induction of these operons. This is Heat-inducible transcription repressor HrcA from Bacillus cereus (strain AH187).